The sequence spans 443 residues: Dynein regulatory complex protein 9 (443 aa).

2 disordered regions span residues 1–40 (MEED…LPKE) and 415–443 (GFKM…GKKK). The IQ domain occupies 393–422 (ELKSVIKLQAWWRGTMIRREIGGFKMPKDK). Residues 415–430 (GFKMPKDKVDSKDSKG) are compositionally biased toward basic and acidic residues. The span at 431–443 (KGKGKDKRRGKKK) shows a compositional bias: basic residues.

This sequence belongs to the DRC9 family. As to quaternary structure, component of the nexin-dynein regulatory complex (N-DRC). Interacts (via IQ domain) with CALM when calcium levels are low. Does not interact with CALM in the presence of Ca(2+). Interacts with the HSP70 proteins HSPA1L and HSPA8. May form a complex with CAMK4 and HSP70.

The protein localises to the cytoplasm. It localises to the cell projection. Its subcellular location is the cilium. It is found in the flagellum. The protein resides in the cytoskeleton. The protein localises to the flagellum axoneme. In terms of biological role, component of the nexin-dynein regulatory complex (N-DRC), a key regulator of ciliary/flagellar motility which maintains the alignment and integrity of the distal axoneme and regulates microtubule sliding in motile axonemes. Binds calmodulin when cellular Ca(2+) levels are low and thereby contributes to the regulation of calcium and calmodulin-dependent protein kinase IV (CAMK4) activity; contributes to the regulation of CAMK4 signaling cascades. Required for normal axoneme assembly in sperm flagella, normal sperm tail formation and for male fertility. This chain is Dynein regulatory complex protein 9 (IQCG), found in Macaca fascicularis (Crab-eating macaque).